The primary structure comprises 386 residues: S-adenosylmethionine synthase (386 aa).

H16 provides a ligand contact to ATP. D18 is a Mg(2+) binding site. E44 lines the K(+) pocket. 2 residues coordinate L-methionine: E57 and Q100. Positions 100–110 (QSPDINQGVDQ) are flexible loop. ATP is bound by residues 164-166 (DGK), 230-231 (RF), D239, 245-246 (RK), A262, and K266. D239 is an L-methionine binding site. Position 270 (K270) interacts with L-methionine.

The protein belongs to the AdoMet synthase family. As to quaternary structure, homotetramer; dimer of dimers. Mg(2+) is required as a cofactor. The cofactor is K(+).

Its subcellular location is the cytoplasm. The enzyme catalyses L-methionine + ATP + H2O = S-adenosyl-L-methionine + phosphate + diphosphate. The protein operates within amino-acid biosynthesis; S-adenosyl-L-methionine biosynthesis; S-adenosyl-L-methionine from L-methionine: step 1/1. Its function is as follows. Catalyzes the formation of S-adenosylmethionine (AdoMet) from methionine and ATP. The overall synthetic reaction is composed of two sequential steps, AdoMet formation and the subsequent tripolyphosphate hydrolysis which occurs prior to release of AdoMet from the enzyme. This Nitratiruptor sp. (strain SB155-2) protein is S-adenosylmethionine synthase.